The following is a 130-amino-acid chain: uncharacterized protein (130 aa).

Positions 1 to 19 are cleaved as a signal peptide; it reads MLAPLFLCCLRNLFRKLIS.

The protein resides in the secreted. This is an uncharacterized protein from Homo sapiens (Human).